The primary structure comprises 675 residues: Probable potassium transport system protein Kup (675 aa).

The segment covering 1–12 has biased composition (basic and acidic residues); the sequence is MEPAMPEHDGDH. The disordered stretch occupies residues 1–25; the sequence is MEPAMPEHDGDHASNPPHGVGIPND. A run of 12 helical transmembrane segments spans residues 62-82, 104-124, 153-173, 195-215, 222-242, 255-275, 300-320, 332-352, 390-410, 419-439, 450-470, and 472-492; these read ALLAVLGVVYGDIGTSPLYAL, LASLTFWALMLIVTIKYVILI, WLFGLVGIAGTCLFFGDSIIT, IIIPLAMVVLVALFSVQVLGT, FGPIMVCWFSVLAILGIKGIF, FALEFIVLHGYLSFIALGSVV, WLFFVLPSLTLNYFGQAALLI, LLVPHWAQIPMLVLATFATVI, IYLPSLNWILAFGALVLVLAF, AYGIAVTGTFLCTCVLAMVVF, VAIVFGFFFIVDSIFFSANVL, and IPDGGWVPLAIGIISTIIMTT.

This sequence belongs to the HAK/KUP transporter (TC 2.A.72) family.

It is found in the cell inner membrane. It carries out the reaction K(+)(in) + H(+)(in) = K(+)(out) + H(+)(out). Its function is as follows. Transport of potassium into the cell. Likely operates as a K(+):H(+) symporter. The polypeptide is Probable potassium transport system protein Kup (Gluconobacter oxydans (strain 621H) (Gluconobacter suboxydans)).